A 365-amino-acid polypeptide reads, in one-letter code: Cobalt-precorrin-5B C(1)-methyltransferase (365 aa).

The protein belongs to the CbiD family.

The enzyme catalyses Co-precorrin-5B + S-adenosyl-L-methionine = Co-precorrin-6A + S-adenosyl-L-homocysteine. It participates in cofactor biosynthesis; adenosylcobalamin biosynthesis; cob(II)yrinate a,c-diamide from sirohydrochlorin (anaerobic route): step 6/10. Catalyzes the methylation of C-1 in cobalt-precorrin-5B to form cobalt-precorrin-6A. This Pseudomonas fluorescens (strain Pf0-1) protein is Cobalt-precorrin-5B C(1)-methyltransferase.